A 112-amino-acid chain; its full sequence is Cytochrome c2 (112 aa).

4 residues coordinate heme c: Cys-14, Cys-17, His-18, and Met-91.

This sequence belongs to the cytochrome c family. In terms of processing, binds 1 heme c group covalently per subunit.

Cytochrome c2 is found mainly in purple, non-sulfur, photosynthetic bacteria where it functions as the electron donor to the oxidized bacteriochlorophyll in the photophosphorylation pathway. However, it may also have a role in the respiratory chain and is found in some non-photosynthetic bacteria. The protein is Cytochrome c2 (cycA) of Rhodospirillum rubrum.